The chain runs to 89 residues: Small ribosomal subunit protein uS15 (89 aa).

Residues 1-18 (MSLDTAEKQKLIENHQVH) are compositionally biased toward basic and acidic residues. The disordered stretch occupies residues 1–23 (MSLDTAEKQKLIENHQVHPTDTG).

The protein belongs to the universal ribosomal protein uS15 family. Part of the 30S ribosomal subunit. Forms a bridge to the 50S subunit in the 70S ribosome, contacting the 23S rRNA.

Its function is as follows. One of the primary rRNA binding proteins, it binds directly to 16S rRNA where it helps nucleate assembly of the platform of the 30S subunit by binding and bridging several RNA helices of the 16S rRNA. Functionally, forms an intersubunit bridge (bridge B4) with the 23S rRNA of the 50S subunit in the ribosome. This Prochlorococcus marinus (strain MIT 9301) protein is Small ribosomal subunit protein uS15.